Here is a 415-residue protein sequence, read N- to C-terminus: Exodeoxyribonuclease 7 large subunit (415 aa).

It belongs to the XseA family. Heterooligomer composed of large and small subunits.

It localises to the cytoplasm. The catalysed reaction is Exonucleolytic cleavage in either 5'- to 3'- or 3'- to 5'-direction to yield nucleoside 5'-phosphates.. Functionally, bidirectionally degrades single-stranded DNA into large acid-insoluble oligonucleotides, which are then degraded further into small acid-soluble oligonucleotides. The chain is Exodeoxyribonuclease 7 large subunit from Mycobacterium bovis (strain ATCC BAA-935 / AF2122/97).